A 374-amino-acid polypeptide reads, in one-letter code: MKYLLPSAAAGLLLLAAQPTMAANTGGYATTDGGDVAGAVKKTARSMQDIIDIIEAAKLDSNGKKVKGGAYPLVITYNGNEDALIKAAEANICGQWSKDARGVEIKEFTKGITIIGTNGSSANFGIWLTKSSDIVIRNMRFGYMPGGAQDGDAIRIDNTPNVWIDHNEIFAKNFECAGTKDGDTTFESAIDIKKASTNVTISYNYIHGIKKVGLSGFSSSDTGRDLTYHHNIYDDVNARLPLQRGGQVHAYNNLYTGITSSGLNVRQKGIALIERNWFENAKNPVTSRYDGSNFGTWELRNNNVMSPADFAKYNITWDKDSKPYVNAEDWKSTGTFASVPYSYSPVSAQCVKDKLANYAGVNKNLAVLTAANCN.

Positions 1-22 (MKYLLPSAAAGLLLLAAQPTMA) are cleaved as a signal peptide. C93 and C176 are oxidised to a cystine. Ca(2+)-binding residues include D150, D152, E187, and D191. R239 is an active-site residue. An intrachain disulfide couples C350 to C373.

It belongs to the polysaccharide lyase 1 family. PLADES subfamily. It depends on Ca(2+) as a cofactor.

The protein resides in the secreted. It carries out the reaction Eliminative cleavage of (1-&gt;4)-alpha-D-galacturonan to give oligosaccharides with 4-deoxy-alpha-D-galact-4-enuronosyl groups at their non-reducing ends.. It participates in glycan metabolism; pectin degradation; 2-dehydro-3-deoxy-D-gluconate from pectin: step 2/5. In terms of biological role, involved in maceration and soft-rotting of plant tissue. This Pectobacterium carotovorum (Erwinia carotovora) protein is Pectate lyase 3 (pel3).